Consider the following 751-residue polypeptide: Autophagy-related protein 9 (751 aa).

Over 1-21 (MRKLCGNGSTSMISTDSYKNT) the chain is Cytoplasmic. The chain crosses the membrane as a helical span at residues 22–42 (TFFVIAFSTFLISCIDYTKLF). The Lumenal portion of the chain corresponds to 43 to 71 (SSLSTPEAVGRLEDVLIGQCITKGSFAHT). Residues 72–92 (LFLIILSAFFIFQVANFAMSV) traverse the membrane as a helical segment. Residues 93–276 (PRLLDMYRFY…KDLVQGLRRR (184 aa)) are Cytoplasmic-facing. Residues 277–297 (FVFMGILNAIFAPFIILYLLI) lie within the membrane without spanning it. The Cytoplasmic portion of the chain corresponds to 298-365 (YSFFRYFEEY…PKERTALVMR (68 aa)). The helical transmembrane segment at 366–386 (FVAFVAGSFAAVLLVASLIDP) threads the bilayer. Over 387 to 398 (DLFLHFEITPHR) the chain is Lumenal. Residues 399 to 419 (TVLFYLGVFGSVLAISRGMVP) traverse the membrane as a helical segment. The Cytoplasmic portion of the chain corresponds to 420 to 465 (QENMVFDPEASLNEVVRWTHYLPVEWRGQLHSQMVHQEFSKLFALK). Residues 466–486 (IMIFFSELLSVILTPFILFFS) lie within the membrane without spanning it. Residues 487-751 (LPPCAAAIID…DDGVQIDIKQ (265 aa)) lie on the Cytoplasmic side of the membrane. 2 disordered regions span residues 528-584 (NRPE…DWRS) and 676-751 (AKSS…DIKQ). The span at 544–557 (DSGGGGGGGGGGFA) shows a compositional bias: gly residues. A compositionally biased stretch (polar residues) spans 563 to 576 (RQTTRRAASASPSR). Composition is skewed to basic and acidic residues over residues 708 to 727 (EGDK…KTDG) and 735 to 751 (EHGR…DIKQ).

It belongs to the ATG9 family. As to quaternary structure, homotrimer; forms a homotrimer with a central pore that forms a path between the two membrane leaflets. In terms of processing, phosphorylated by ATG1. ATG1 phosphorylation is required for preautophagosome elongation.

The protein localises to the preautophagosomal structure membrane. It is found in the cytoplasmic vesicle membrane. The protein resides in the golgi apparatus membrane. It localises to the endoplasmic reticulum membrane. The catalysed reaction is a 1,2-diacyl-sn-glycero-3-phosphocholine(in) = a 1,2-diacyl-sn-glycero-3-phosphocholine(out). It carries out the reaction a 1,2-diacyl-sn-glycero-3-phospho-L-serine(in) = a 1,2-diacyl-sn-glycero-3-phospho-L-serine(out). It catalyses the reaction a 1,2-diacyl-sn-glycero-3-phosphoethanolamine(in) = a 1,2-diacyl-sn-glycero-3-phosphoethanolamine(out). The enzyme catalyses a 1,2-diacyl-sn-glycero-3-phospho-(1D-myo-inositol-3-phosphate)(in) = a 1,2-diacyl-sn-glycero-3-phospho-(1D-myo-inositol-3-phosphate)(out). Functionally, phospholipid scramblase involved in autophagy and cytoplasm to vacuole transport (Cvt) vesicle formation. Cycles between the preautophagosomal structure/phagophore assembly site (PAS) and the cytoplasmic vesicle pool and supplies membrane for the growing autophagosome. Lipid scramblase activity plays a key role in preautophagosomal structure/phagophore assembly by distributing the phospholipids that arrive through ATG2 from the cytoplasmic to the luminal leaflet of the bilayer, thereby driving autophagosomal membrane expansion. Required for mitophagy. Also involved in endoplasmic reticulum-specific autophagic process and is essential for the survival of cells subjected to severe ER stress. Different machineries are required for anterograde trafficking to the PAS during either the Cvt pathway or bulk autophagy and for retrograde trafficking. This Cryptococcus gattii (Filobasidiella gattii) protein is Autophagy-related protein 9 (ATG9).